The primary structure comprises 130 residues: Small ribosomal subunit protein uS9 (130 aa).

The protein belongs to the universal ribosomal protein uS9 family.

This chain is Small ribosomal subunit protein uS9, found in Nitrosospira multiformis (strain ATCC 25196 / NCIMB 11849 / C 71).